Here is a 557-residue protein sequence, read N- to C-terminus: Resveratrol cleavage oxygenase 1 (557 aa).

The tract at residues 1-46 (MAILNDPPSSTTILSLHTPDVPPPSKPTPATTSHPQDSRNPRNLTS) is disordered. The piceatannol site is built by tyrosine 144 and lysine 177. Residues tyrosine 144 and lysine 177 each coordinate trans-resveratrol. 3 residues coordinate Fe cation: histidine 211, histidine 262, and histidine 334. Glutamate 404 provides a ligand contact to piceatannol. Position 404 (glutamate 404) interacts with trans-resveratrol. Fe cation is bound at residue histidine 523.

The protein belongs to the carotenoid oxygenase family. It depends on Fe(2+) as a cofactor.

It carries out the reaction trans-resveratrol + O2 = 3,5-dihydroxybenzaldehyde + 4-hydroxybenzaldehyde. The enzyme catalyses piceatannol + O2 = 3,5-dihydroxybenzaldehyde + 3,4-dihydroxybenzaldehyde. Functionally, dioxygenase that cleaves the interphenyl C-alpha-C-beta double bond of resveratrol to yield 3,5-dihydroxybenzaldehyde and 4-hydroxybenzaldehyde. Also cleaves piceatannol, a compound that differs from resveratrol only in the occurrence of an additional hydroxyl group, which leads to the production of 3,4-dihydroxybenzaldehyde and 3,5-hydroxybenzaldehyde. The polypeptide is Resveratrol cleavage oxygenase 1 (Botryotinia fuckeliana (strain B05.10) (Noble rot fungus)).